The sequence spans 228 residues: Sodium channel regulatory subunit beta-4 (228 aa).

An N-terminal signal peptide occupies residues 1 to 30 (MSRAGNRGNTQARWLGIGLLGLFLLPMYLS). One can recognise an Ig-like C2-type domain in the interval 31 to 148 (LEVSVGKATT…KDLNNSATIF (118 aa)). Residues 31-161 (LEVSVGKATT…VDKLEEVDNT (131 aa)) lie on the Extracellular side of the membrane. N-linked (GlcNAc...) asparagine glycosylation is found at N45, N71, N113, and N142. C53 and C131 are joined by a disulfide. Residues 162 to 182 (VTLIILAVVGGVIGLLVCILL) form a helical membrane-spanning segment. Residues 183–228 (LKKLITFILKKTREKKKECLVSSSGNDNTENGLPGSKAEEKPPTKV) lie on the Cytoplasmic side of the membrane. The disordered stretch occupies residues 199–228 (KECLVSSSGNDNTENGLPGSKAEEKPPTKV). Residues 203 to 213 (VSSSGNDNTEN) show a composition bias toward polar residues. Basic and acidic residues predominate over residues 219–228 (KAEEKPPTKV).

This sequence belongs to the sodium channel auxiliary subunit SCN4B (TC 8.A.17) family. As to quaternary structure, a voltage-gated sodium (Nav) channel consists of an ion-conducting pore-forming alpha subunit functional on its own that is regulated by one or more beta subunits. The beta subunit SCN4B is disulfide-linked to the pore-forming alpha subunit. Interacts with SCN1A; regulatory subunit of SCN1A/Nav1.1. Interacts with SCN2A; regulatory subunit of SCN2A/Nav1.2. Contains an interchain disulfide bond with SCN2A. As to expression, expressed at a high level in dorsal root ganglia, at a lower level in brain, spinal cord, skeletal muscle and heart.

It is found in the cell membrane. In terms of biological role, regulatory subunit of multiple voltage-gated sodium (Nav) channels directly mediating the depolarization of excitable membranes. Navs, also called VGSCs (voltage-gated sodium channels) or VDSCs (voltage-dependent sodium channels), operate by switching between closed and open conformations depending on the voltage difference across the membrane. In the open conformation they allow Na(+) ions to selectively pass through the pore, along their electrochemical gradient. The influx of Na+ ions provokes membrane depolarization, initiating the propagation of electrical signals throughout cells and tissues. The accessory beta subunits participate in localization and functional modulation of the Nav channels. Modulates the activity of SCN1A/Nav1.1. Modulates the activity of SCN2A/Nav1.2. The sequence is that of Sodium channel regulatory subunit beta-4 from Rattus norvegicus (Rat).